A 686-amino-acid chain; its full sequence is DNA topoisomerase 1 (686 aa).

In terms of domain architecture, Toprim spans 1 to 141 (MILIIAEKPN…KRMKFSALTK (141 aa)). Mg(2+) contacts are provided by Glu-7 and Asp-107. The Topo IA-type catalytic domain occupies 156–574 (NFGMANAGIA…EAKERLTKIL (419 aa)). The interaction with DNA stretch occupies residues 196–201 (STGRVQ). Catalysis depends on Tyr-317, which acts as the O-(5'-phospho-DNA)-tyrosine intermediate. The C4-type 1 zinc finger occupies 606 to 634 (CPKCGGDLIVKYNKKTGKRFVGCSNWPKC). The C4-type 2; atypical zinc finger occupies 653 to 678 (CCNGAPVVIIREEDGREFEICLDINC).

This sequence belongs to the type IA topoisomerase family. As to quaternary structure, monomer. Mg(2+) serves as cofactor.

It catalyses the reaction ATP-independent breakage of single-stranded DNA, followed by passage and rejoining.. Functionally, releases the supercoiling and torsional tension of DNA, which is introduced during the DNA replication and transcription, by transiently cleaving and rejoining one strand of the DNA duplex. Introduces a single-strand break via transesterification at a target site in duplex DNA. The scissile phosphodiester is attacked by the catalytic tyrosine of the enzyme, resulting in the formation of a DNA-(5'-phosphotyrosyl)-enzyme intermediate and the expulsion of a 3'-OH DNA strand. The free DNA strand then undergoes passage around the unbroken strand, thus removing DNA supercoils. Finally, in the religation step, the DNA 3'-OH attacks the covalent intermediate to expel the active-site tyrosine and restore the DNA phosphodiester backbone. The chain is DNA topoisomerase 1 from Pyrococcus horikoshii (strain ATCC 700860 / DSM 12428 / JCM 9974 / NBRC 100139 / OT-3).